Consider the following 137-residue polypeptide: uncharacterized protein (137 aa).

The interval 1–32 is disordered; it reads MRDHLPPGLPPDPFADDPCDPSAALDAVEPGQ.

This sequence to M.tuberculosis Rv3412.

This is an uncharacterized protein from Mycobacterium leprae (strain TN).